Reading from the N-terminus, the 727-residue chain is Procollagen-lysine,2-oxoglutarate 5-dioxygenase 1 (727 aa).

The signal sequence occupies residues 1-18; the sequence is MRPLLLLAPLGWLLLAEA. N-linked (GlcNAc...) asparagine glycans are attached at residues N163, N197, and N538. The region spanning 636–727 is the Fe2OG dioxygenase domain; sequence QFDLAFVVRY…RYIAVSFVDP (92 aa). Residues H656 and D658 each coordinate Fe cation. N-linked (GlcNAc...) asparagine glycosylation is present at N686. H708 contributes to the Fe cation binding site. R718 is an active-site residue.

Homodimer. Identified in a complex with P3H3 and P3H4. Requires Fe(2+) as cofactor. The cofactor is L-ascorbate.

It localises to the rough endoplasmic reticulum membrane. The catalysed reaction is L-lysyl-[collagen] + 2-oxoglutarate + O2 = (5R)-5-hydroxy-L-lysyl-[collagen] + succinate + CO2. Functionally, part of a complex composed of PLOD1, P3H3 and P3H4 that catalyzes hydroxylation of lysine residues in collagen alpha chains and is required for normal assembly and cross-linkling of collagen fibrils. Forms hydroxylysine residues in -Xaa-Lys-Gly- sequences in collagens. These hydroxylysines serve as sites of attachment for carbohydrate units and are essential for the stability of the intermolecular collagen cross-links. In Pongo abelii (Sumatran orangutan), this protein is Procollagen-lysine,2-oxoglutarate 5-dioxygenase 1 (PLOD1).